The chain runs to 1170 residues: Protein SCAR4 (1170 aa).

Disordered regions lie at residues 180-207 (KLGKDKRLRQSKKKGSHTTIKETPEDSR), 356-376 (NDADSPASTESEVKEAGSDDK), 631-674 (AAPK…PRDL), 701-742 (SYSG…NQTG), 783-819 (NQRQESPSETGSANSRTSSDESPPTQNGSVGVQSSPL), 960-980 (EESKATEEQSPSGVNGTSDTY), and 1026-1046 (HNNPHPAKLEEEEPQVDHPLE). Residues 183–195 (KDKRLRQSKKKGS) are compositionally biased toward basic residues. Residues 198–207 (TIKETPEDSR) are compositionally biased toward basic and acidic residues. The segment covering 356–365 (NDADSPASTE) has biased composition (polar residues). Positions 366–376 (SEVKEAGSDDK) are enriched in basic and acidic residues. 4 stretches are compositionally biased toward polar residues: residues 640–668 (SQDGSSMNPAQSKHISTSEISSENGTLMS), 701–716 (SYSGQEDPQTMSIVSD), 783–818 (NQRQESPSETGSANSRTSSDESPPTQNGSVGVQSSP), and 967–980 (EQSPSGVNGTSDTY). In terms of domain architecture, WH2 spans 1105 to 1123 (ENDSLLEIIRSKSFNLRPA).

It belongs to the SCAR/WAVE family. Interacts with SPK1. Expressed in expanding cotyledons, expanding leaves and expanding siliques containing developing embryos. Detected in unopened flower buds and in the expanding tip region of roots. Reduced expression in mature leaves.

Its subcellular location is the cytoplasm. The protein resides in the cytoskeleton. Its function is as follows. Involved in regulation of actin and microtubule organization. Part of a WAVE complex that activates the Arp2/3 complex. Regulates trichome branch positioning and expansion. This chain is Protein SCAR4 (SCAR4), found in Arabidopsis thaliana (Mouse-ear cress).